The sequence spans 90 residues: MMKTSVMLMLVVVISLMCSGEAQEVARTYCGRHLADTLADLCFGVEKRGGAQYAPYFWTRQYLGSRGKRGVVDECCFRPCTLDVLLSYCG.

The signal sequence occupies residues 1–20 (MMKTSVMLMLVVVISLMCSG). 3 disulfide bridges follow: C30-C76, C42-C89, and C75-C80. Residues 49–67 (GGAQYAPYFWTRQYLGSRG) constitute a propeptide, c peptide like.

It belongs to the insulin family. In terms of assembly, heterodimer of a B chain and an A chain linked by two disulfide bonds.

The protein localises to the secreted. Its function is as follows. Brain peptide responsible for activation of prothoracic glands to produce ecdysone in insects. In Bombyx mori (Silk moth), this protein is Bombyxin B-7 (BBXB7).